The following is a 486-amino-acid chain: Malonate-semialdehyde dehydrogenase (486 aa).

Residues Phe154, Lys178, Glu181, Arg182, and Ser231 each coordinate NAD(+). Catalysis depends on Cys286, which acts as the Nucleophile. An NAD(+)-binding site is contributed by Glu386.

It belongs to the aldehyde dehydrogenase family. IolA subfamily. As to quaternary structure, homotetramer.

It carries out the reaction 3-oxopropanoate + NAD(+) + CoA + H2O = hydrogencarbonate + acetyl-CoA + NADH + H(+). It catalyses the reaction 2-methyl-3-oxopropanoate + NAD(+) + CoA + H2O = propanoyl-CoA + hydrogencarbonate + NADH + H(+). It functions in the pathway polyol metabolism; myo-inositol degradation into acetyl-CoA; acetyl-CoA from myo-inositol: step 7/7. Catalyzes the oxidation of malonate semialdehyde (MSA) and methylmalonate semialdehyde (MMSA) into acetyl-CoA and propanoyl-CoA, respectively. Is involved in a myo-inositol catabolic pathway. Bicarbonate, and not CO2, is the end-product of the enzymatic reaction. This chain is Malonate-semialdehyde dehydrogenase, found in Bacillus pumilus (strain SAFR-032).